The sequence spans 475 residues: MKYELVVGLEVHCQLNTASKAFCSCSAQFGKPANSNVCPVCLALPGALPVLNRRVVEDAVKLGLATGCAIAPHSVLARKNYFYPDLPKGYQISQFEEPICIEGHLMVDAGEGEKLIRLIRIHIEEDAGKSIHDIGDDTYIDVNRCGVPLLEIVSYPDIRTAKEASTYLQKLRQIVKYLGISDGNMEEGSLRCDANVSLRPVGDEEYGTRTEIKNMNSFKNVEKAIEFEAERHRGILEEGGTIVQETRLWDADKGETRSMRGKEFAHDYRYFPDPDLVPVLVDDEMLRRIRLELPEFPEARASRFVEQYGIPVYDAAVLTVEREMADYFEAVVEVAGDGKVSSNWVMGEVMRTLKEKYLDITAFSVAPSRLGGLIKLIGSGAISNTIAKQVFELMQQSEASAEEIVQREGLAQVSDTGEIERVVDEILAANPDQLAGYREGKVKLFGFFVGQCMARMKGKANPKVVNEVLQRKLEG.

Belongs to the GatB/GatE family. GatB subfamily. Heterotrimer of A, B and C subunits.

It carries out the reaction L-glutamyl-tRNA(Gln) + L-glutamine + ATP + H2O = L-glutaminyl-tRNA(Gln) + L-glutamate + ADP + phosphate + H(+). It catalyses the reaction L-aspartyl-tRNA(Asn) + L-glutamine + ATP + H2O = L-asparaginyl-tRNA(Asn) + L-glutamate + ADP + phosphate + 2 H(+). Functionally, allows the formation of correctly charged Asn-tRNA(Asn) or Gln-tRNA(Gln) through the transamidation of misacylated Asp-tRNA(Asn) or Glu-tRNA(Gln) in organisms which lack either or both of asparaginyl-tRNA or glutaminyl-tRNA synthetases. The reaction takes place in the presence of glutamine and ATP through an activated phospho-Asp-tRNA(Asn) or phospho-Glu-tRNA(Gln). The chain is Aspartyl/glutamyl-tRNA(Asn/Gln) amidotransferase subunit B from Chlorobium luteolum (strain DSM 273 / BCRC 81028 / 2530) (Pelodictyon luteolum).